The chain runs to 132 residues: Large ribosomal subunit protein bL12 (132 aa).

It belongs to the bacterial ribosomal protein bL12 family. Homodimer. Part of the ribosomal stalk of the 50S ribosomal subunit. Forms a multimeric L10(L12)X complex, where L10 forms an elongated spine to which 2 to 4 L12 dimers bind in a sequential fashion. Binds GTP-bound translation factors.

Forms part of the ribosomal stalk which helps the ribosome interact with GTP-bound translation factors. Is thus essential for accurate translation. The chain is Large ribosomal subunit protein bL12 from Ehrlichia canis (strain Jake).